The primary structure comprises 199 residues: uncharacterized protein (199 aa).

The next 4 membrane-spanning stretches (helical) occupy residues 40 to 60 (LLIC…FCFL), 86 to 106 (VLTG…TFPF), 117 to 137 (TSWP…LTSS), and 166 to 186 (FLLA…ALIL).

The protein localises to the membrane. This is an uncharacterized protein from Saccharomyces cerevisiae (strain ATCC 204508 / S288c) (Baker's yeast).